The chain runs to 231 residues: tRNA1(Val) (adenine(37)-N6)-methyltransferase (231 aa).

The protein belongs to the methyltransferase superfamily. tRNA (adenine-N(6)-)-methyltransferase family.

It is found in the cytoplasm. The catalysed reaction is adenosine(37) in tRNA1(Val) + S-adenosyl-L-methionine = N(6)-methyladenosine(37) in tRNA1(Val) + S-adenosyl-L-homocysteine + H(+). Specifically methylates the adenine in position 37 of tRNA(1)(Val) (anticodon cmo5UAC). The sequence is that of tRNA1(Val) (adenine(37)-N6)-methyltransferase from Flavobacteriaceae bacterium (strain 3519-10).